The chain runs to 417 residues: Imidazolonepropionase (417 aa).

Residues histidine 80 and histidine 82 each contribute to the Fe(3+) site. The Zn(2+) site is built by histidine 80 and histidine 82. 4-imidazolone-5-propanoate-binding residues include arginine 89, tyrosine 152, and histidine 187. Residue tyrosine 152 participates in N-formimidoyl-L-glutamate binding. Histidine 252 is a Fe(3+) binding site. Position 252 (histidine 252) interacts with Zn(2+). Glutamate 255 contacts 4-imidazolone-5-propanoate. Aspartate 326 serves as a coordination point for Fe(3+). Aspartate 326 serves as a coordination point for Zn(2+). Asparagine 328 and glycine 330 together coordinate N-formimidoyl-L-glutamate. Serine 331 contributes to the 4-imidazolone-5-propanoate binding site.

This sequence belongs to the metallo-dependent hydrolases superfamily. HutI family. Requires Zn(2+) as cofactor. Fe(3+) serves as cofactor.

Its subcellular location is the cytoplasm. It carries out the reaction 4-imidazolone-5-propanoate + H2O = N-formimidoyl-L-glutamate. It participates in amino-acid degradation; L-histidine degradation into L-glutamate; N-formimidoyl-L-glutamate from L-histidine: step 3/3. Functionally, catalyzes the hydrolytic cleavage of the carbon-nitrogen bond in imidazolone-5-propanoate to yield N-formimidoyl-L-glutamate. It is the third step in the universal histidine degradation pathway. This is Imidazolonepropionase from Bacteroides fragilis (strain YCH46).